Consider the following 202-residue polypeptide: Protein lin-28 homolog A (202 aa).

Disordered stretches follow at residues Met1–His33 and Ser100–Gly128. Residues Glu18–Ser29 are compositionally biased toward acidic residues. Positions His33–Pro106 constitute a CSD domain. The tract at residues Gly107–Arg130 is flexible linker. 2 consecutive CCHC-type zinc fingers follow at residues Asp129–Leu146 and Lys151–Ile168. Positions 131, 134, 139, 144, 153, 156, 161, and 166 each coordinate Zn(2+). The tract at residues Ala170 to Asp202 is disordered. Polar residues predominate over residues Gln171–Thr185. Ser174 is subject to Phosphoserine.

The protein belongs to the lin-28 family. Monomer.

The protein resides in the cytoplasm. It localises to the rough endoplasmic reticulum. Its subcellular location is the P-body. It is found in the stress granule. The protein localises to the nucleus. The protein resides in the nucleolus. RNA-binding protein that inhibits processing of pre-let-7 miRNAs and regulates translation of mRNAs that control developmental timing, pluripotency and metabolism. Seems to recognize a common structural G-quartet (G4) feature in its miRNA and mRNA targets. 'Translational enhancer' that drives specific mRNAs to polysomes and increases the efficiency of protein synthesis. Its association with the translational machinery and target mRNAs results in an increased number of initiation events per molecule of mRNA and, indirectly, in mRNA stabilization. Suppressor of microRNA (miRNA) biogenesis, including that of let-7. Binds specific target miRNA precursors (pre-miRNAs), recognizing an 5'-GGAG-3' motif found in their terminal loop, and recruits uridylyltransferase. This results in the terminal uridylation of target pre-miRNAs. Uridylated pre-miRNAs fail to be processed by Dicer and undergo degradation. Localized to the periendoplasmic reticulum area, binds to a large number of spliced mRNAs and inhibits the translation of mRNAs destined for the ER, reducing the synthesis of transmembrane proteins, ER or Golgi lumen proteins, and secretory proteins. Binds to and enhances the translation of mRNAs for several metabolic enzymes, increasing glycolysis and oxidative phosphorylation. Which, with the let-7 repression may enhance tissue repair in adult tissue. The protein is Protein lin-28 homolog A (lin28a) of Danio rerio (Zebrafish).